Reading from the N-terminus, the 142-residue chain is UPF0275 protein PM0505 (142 aa).

Belongs to the UPF0275 family.

This chain is UPF0275 protein PM0505, found in Pasteurella multocida (strain Pm70).